The following is a 428-amino-acid chain: Cytokine-dependent hematopoietic cell linker (428 aa).

Residues 1-22 are disordered; that stretch reads MNRQGNRKTTKEGSNDLKFQNF. Residues Tyr69 and Tyr96 each carry the phosphotyrosine; by LYN modification. Disordered stretches follow at residues 135–198 and 244–271; these read DKPI…EVQR and SSSFTTSNHSVQNRDHRGGMQPCSPQRC. Positions 159-164 are mediates interaction with PLCG1; essential for BCR signaling; involved in restoration of BCR-induced calcium response and ERK2 and JNK2 activation in BLNK-deficient cells expressing LAT; the sequence is PLPPPR. A mediates interaction with LAT, GRB2, and FGR; involved in translocation to the glycolipid-enriched microdomain and restoration of BCR-induced calcium response in BLNK-deficient DT40 cells expressing LAT region spans residues 178–180; sequence PEP. Positions 244-253 are enriched in low complexity; it reads SSSFTTSNHS. In terms of domain architecture, SH2 spans 309–419; sequence WYIGEYSRQA…RKQCHLTQPL (111 aa).

When phosphorylated, interacts with PLCG1, PLCG2, GRB2, VAV and LAT. Interacts with LBR and AGO2. Interacts with FGR. Part of a complex consisting of CLNK, SKAP1 and FYB1. Interacts (via SH2 domain) with FYB1; this interaction allows SKAP1 and FYB1 to promote tyrosine phosphorylation of CLNK by LYN. Interacts (via SH2 domain) with MAP4K1. Post-translationally, tyrosine-phosphorylated upon BCR cross-linking. Tyrosine phosphorylation at both Tyr-69 and Tyr-96 are required for BCR-induced calcium response and are essential to restore PLCG2-mediated signaling in BLNK-deficient DT40 cells, but this phosphorylation is dispensable in cells expressing LAT. Interacts with the SH2 domain of PLCG1 via phosphorylated Tyr-96. Tyrosine phosphorylation is increased when complexed with SKAP1 and FYB1.

The protein localises to the cytoplasm. In terms of biological role, an adapter protein which plays a role in the regulation of immunoreceptor signaling, including PLC-gamma-mediated B-cell antigen receptor (BCR) signaling and FC-epsilon R1-mediated mast cell degranulation. Together with FGR, it acts as a negative regulator of natural killer cell-activating receptors and inhibits interferon-gamma production. Acts as a positive regulator of both T-cell receptor and natural killer T (NKT) cell receptor signaling in CD4-positive NKT cells. Together with MAP4K1, it enhances CD3-triggered activation of T-cells and subsequent IL2 production. May be involved in tumor necrosis factor induced cell death by promoting reactive oxidative species generation, and MLKL oligomerization, ultimately leading to necrosis. Involved in phosphorylation of LAT. May be involved in high affinity immunoglobulin epsilon receptor signaling in mast cells. This is Cytokine-dependent hematopoietic cell linker (CLNK) from Homo sapiens (Human).